The primary structure comprises 166 residues: Ribosome-binding factor A (166 aa).

The segment at 122–166 (LASTAEHAGDADPYRVDTEDDDDDTDGADAEARSDADVRRGPQSG) is disordered. The span at 128 to 138 (HAGDADPYRVD) shows a compositional bias: basic and acidic residues. Over residues 139–150 (TEDDDDDTDGAD) the composition is skewed to acidic residues. The span at 151–166 (AEARSDADVRRGPQSG) shows a compositional bias: basic and acidic residues.

This sequence belongs to the RbfA family. As to quaternary structure, monomer. Binds 30S ribosomal subunits, but not 50S ribosomal subunits or 70S ribosomes.

The protein localises to the cytoplasm. Its function is as follows. One of several proteins that assist in the late maturation steps of the functional core of the 30S ribosomal subunit. Associates with free 30S ribosomal subunits (but not with 30S subunits that are part of 70S ribosomes or polysomes). Required for efficient processing of 16S rRNA. May interact with the 5'-terminal helix region of 16S rRNA. This is Ribosome-binding factor A from Saccharopolyspora erythraea (strain ATCC 11635 / DSM 40517 / JCM 4748 / NBRC 13426 / NCIMB 8594 / NRRL 2338).